The primary structure comprises 304 residues: MGDSTKKAETAKDEGTSQERREARPLPTAADFEGKDTSENTDGRAADADGEMSLERRLDSLREFLRERRGAIRVTNPGLETGRPRLQLAENMRPDPTNPYNRPSIEALSRIKPIAISNNMATSEDMMRIYVNLEGLGVPTEHVQQVVIQAVLFCKDASSSVFLDPRGSFEWPRGAITADAVLAVLKKDAETLRRVCRLYAPVTWNHMLTHNAPPADWAAMGFQYEDRFAAFDCFDYVENTAAVQPLEGLIRRPTPREKVAHNTHKDIAVRGANRNQVFSSLNAEVTGGMNGPELTRDYVKSNRK.

2 stretches are compositionally biased toward basic and acidic residues: residues 1 to 24 (MGDS…REAR) and 32 to 54 (FEGK…EMSL). The interval 1 to 54 (MGDSTKKAETAKDEGTSQERREARPLPTAADFEGKDTSENTDGRAADADGEMSL) is disordered.

It belongs to the potexviruses coat protein family.

It localises to the virion. Required for genome encapsidation. Forms ribonucleoprotein complexes along with TGB1 helicase and viral RNA. This is Capsid protein from Potato virus M (strain Russian) (PVM).